Here is a 429-residue protein sequence, read N- to C-terminus: Protein arginine N-methyltransferase 2 (429 aa).

2 disordered regions span residues 41 to 76 and 137 to 180; these read PEVA…EDHE and ALDS…EETP. Positions 137-163 are enriched in acidic residues; it reads ALDSDDEDDEEMAEGEEAQAEDGEEAP. A compositionally biased stretch (low complexity) spans 164–174; sequence ELVAAEEATQT. An RMT2 domain is found at 190-429; the sequence is LEEQVTSDKY…YRLPVCTFLG (240 aa). S-adenosyl-L-methionine is bound by residues Y199, M228, 250–255, 271–273, 308–309, and D328; these read FGMGII, EAH, and WQ.

Belongs to the class I-like SAM-binding methyltransferase superfamily. RMT2 methyltransferase family. Monomer.

The protein localises to the cytoplasm. It localises to the nucleus. Its function is as follows. S-adenosyl-L-methionine-dependent protein-arginine N-methyltransferase that methylates the delta-nitrogen atom of arginine residues to form N5-methylarginine (type IV) in target proteins. Monomethylates ribosomal protein L12. In Neurospora crassa (strain ATCC 24698 / 74-OR23-1A / CBS 708.71 / DSM 1257 / FGSC 987), this protein is Protein arginine N-methyltransferase 2.